Consider the following 105-residue polypeptide: Meiotically up-regulated gene 52 protein (105 aa).

Has a role in meiosis. The chain is Meiotically up-regulated gene 52 protein (mug52) from Schizosaccharomyces pombe (strain 972 / ATCC 24843) (Fission yeast).